Here is a 342-residue protein sequence, read N- to C-terminus: Hypoxia responsive morphology factor C (342 aa).

The Bipartite nuclear localization signal motif lies at 46–68; that stretch reads RMKIPRRKSEYSSHDRLKRARKI. The segment at 151–181 is RNA recognition motif (RRM)-like domain; it reads ADDAWAYNAADMDTAVKFFSEAIYKAIESSP.

This sequence belongs to the hrmA family.

It localises to the nucleus. In terms of biological role, probably modulates the generation of the hypoxia-typic morphotype (called H-MORPH) with altered biofilm architecture that leads to increased host inflammation, rapid disease progression, and mortality in a murine model of invasive aspergillosis. This is Hypoxia responsive morphology factor C from Aspergillus fumigatus (strain CBS 144.89 / FGSC A1163 / CEA10) (Neosartorya fumigata).